Reading from the N-terminus, the 332-residue chain is Holliday junction branch migration complex subunit RuvB (332 aa).

Residues 1-181 (MARILDNDVM…FGITGHMEYY (181 aa)) are large ATPase domain (RuvB-L). ATP is bound by residues L20, R21, G62, K65, T66, T67, 128 to 130 (EDF), R171, Y181, and R218. T66 lines the Mg(2+) pocket. The tract at residues 182–252 (QEKDLTEIVE…ITDRALTMLD (71 aa)) is small ATPAse domain (RuvB-S). Residues 255–332 (REGLDYIDQK…RHLGYPYQNT (78 aa)) form a head domain (RuvB-H) region. The DNA site is built by R291, R310, R312, and R315.

This sequence belongs to the RuvB family. In terms of assembly, homohexamer. Forms an RuvA(8)-RuvB(12)-Holliday junction (HJ) complex. HJ DNA is sandwiched between 2 RuvA tetramers; dsDNA enters through RuvA and exits via RuvB. An RuvB hexamer assembles on each DNA strand where it exits the tetramer. Each RuvB hexamer is contacted by two RuvA subunits (via domain III) on 2 adjacent RuvB subunits; this complex drives branch migration. In the full resolvosome a probable DNA-RuvA(4)-RuvB(12)-RuvC(2) complex forms which resolves the HJ.

The protein resides in the cytoplasm. The enzyme catalyses ATP + H2O = ADP + phosphate + H(+). Its function is as follows. The RuvA-RuvB-RuvC complex processes Holliday junction (HJ) DNA during genetic recombination and DNA repair, while the RuvA-RuvB complex plays an important role in the rescue of blocked DNA replication forks via replication fork reversal (RFR). RuvA specifically binds to HJ cruciform DNA, conferring on it an open structure. The RuvB hexamer acts as an ATP-dependent pump, pulling dsDNA into and through the RuvAB complex. RuvB forms 2 homohexamers on either side of HJ DNA bound by 1 or 2 RuvA tetramers; 4 subunits per hexamer contact DNA at a time. Coordinated motions by a converter formed by DNA-disengaged RuvB subunits stimulates ATP hydrolysis and nucleotide exchange. Immobilization of the converter enables RuvB to convert the ATP-contained energy into a lever motion, pulling 2 nucleotides of DNA out of the RuvA tetramer per ATP hydrolyzed, thus driving DNA branch migration. The RuvB motors rotate together with the DNA substrate, which together with the progressing nucleotide cycle form the mechanistic basis for DNA recombination by continuous HJ branch migration. Branch migration allows RuvC to scan DNA until it finds its consensus sequence, where it cleaves and resolves cruciform DNA. This Streptococcus pyogenes serotype M12 (strain MGAS9429) protein is Holliday junction branch migration complex subunit RuvB.